Here is a 94-residue protein sequence, read N- to C-terminus: MSEEKPKEGVKTENDHINLKVAGQDGSVVQFKIKRHTPLSKLMKAYCDRQGLSMRQIRFRFDGQPINETDTPAQLEMEDEDTIDVFQQQTGGVC.

Lys11 participates in a covalent cross-link: Glycyl lysine isopeptide (Lys-Gly) (interchain with G-Cter in SUMO). The Ubiquitin-like domain occupies 15-92; it reads DHINLKVAGQ…IDVFQQQTGG (78 aa). Gly92 participates in a covalent cross-link: Glycyl lysine isopeptide (Gly-Lys) (interchain with K-? in acceptor proteins). Residues 93-94 constitute a propeptide that is removed on maturation; the sequence is VC.

Belongs to the ubiquitin family. SUMO subfamily. As to quaternary structure, interacts with sae2 and ube2i. Covalently attached to a number of proteins. Polymeric chains can be formed through Lys-11 cross-linking. Post-translationally, cleavage of precursor form by a sentrin-specific protease is necessary for function.

The protein localises to the cytoplasm. The protein resides in the nucleus. It localises to the PML body. Functionally, ubiquitin-like protein which can be covalently attached to target lysines either as a monomer or as a lysine-linked polymer. Does not seem to be involved in protein degradation and may function as an antagonist of ubiquitin in the degradation process. Plays a role in a number of cellular processes such as nuclear transport, DNA replication and repair, mitosis and signal transduction. Covalent attachment to its substrates requires prior activation by the E1 complex sae1-sae2 and linkage to the E2 enzyme ube2i. The protein is Small ubiquitin-related modifier 3 (sumo3) of Xenopus laevis (African clawed frog).